The chain runs to 314 residues: MTDTTILPRPEVSGDFLVAALYHFARLPRFESLREQLFELCQKNGVKGTLLLAAEGINGTIAGPDAGVQAVLSFLRAQPEFAALEHKESRASHMPFVRLKVKLKKEIVTMGVPDIDPNRIVGTYVDPRDWNALISDPDTIVIDTRNDYETAIGVFKGAVDPQTKTFREFPDWVKNNPGLHNKPKIAMYCTGGIRCEKATAFMKEQGFDEVYHLKGGILKYLEEVPEEESLWEGACFVFDERVSVVHGLAEGDHQLCHACRNPITPDVRLSPKFEEGVSCPSCYDERSEDDRQRFRDRQQQIELAKTRGERHLGR.

One can recognise a Rhodanese domain in the interval S135–S229. C189 acts as the Cysteine persulfide intermediate in catalysis.

It belongs to the TrhO family.

The enzyme catalyses uridine(34) in tRNA + AH2 + O2 = 5-hydroxyuridine(34) in tRNA + A + H2O. Catalyzes oxygen-dependent 5-hydroxyuridine (ho5U) modification at position 34 in tRNAs. The sequence is that of tRNA uridine(34) hydroxylase from Agrobacterium fabrum (strain C58 / ATCC 33970) (Agrobacterium tumefaciens (strain C58)).